The sequence spans 601 residues: Probable translation initiation factor IF-2 (601 aa).

The region spanning 14-229 (LRTPIVAVLG…VMMGLSQRYM (216 aa)) is the tr-type G domain. The G1 stretch occupies residues 23-30 (GHVDHGKT). 23–30 (GHVDHGKT) lines the GTP pocket. Positions 48–52 (AITQH) are G2. The tract at residues 85 to 88 (DTPG) is G3. GTP-binding positions include 85-89 (DTPGH) and 139-142 (NKID). The interval 139 to 142 (NKID) is G4. The interval 207 to 209 (SAE) is G5.

This sequence belongs to the TRAFAC class translation factor GTPase superfamily. Classic translation factor GTPase family. IF-2 subfamily.

Its function is as follows. Function in general translation initiation by promoting the binding of the formylmethionine-tRNA to ribosomes. Seems to function along with eIF-2. In Haloarcula marismortui (strain ATCC 43049 / DSM 3752 / JCM 8966 / VKM B-1809) (Halobacterium marismortui), this protein is Probable translation initiation factor IF-2.